The following is a 1119-amino-acid chain: Synaptojanin (1119 aa).

The region spanning 119 to 438 (LQRLLSSQMF…GDQCSTIYAG (320 aa)) is the SAC domain. The catalytic stretch occupies residues 532–826 (GTWNVNGGKN…DRSELKTSDH (295 aa)). 2 disordered regions span residues 986 to 1005 (SLTL…ARSE) and 1042 to 1119 (EHVP…PKNM). The segment covering 1050–1072 (PQSNNNKSPPQACLFNPFTQSAP) has biased composition (low complexity). Composition is skewed to pro residues over residues 1073–1085 (SPAP…PLPP) and 1093–1119 (PGPP…PKNM).

It belongs to the synaptojanin family. The protein in the central section; belongs to the inositol 1,4,5-trisphosphate 5-phosphatase family.

The protein localises to the cytoplasmic vesicle. It is found in the secretory vesicle. Its subcellular location is the synaptic vesicle. The protein resides in the synapse. The enzyme catalyses a 1,2-diacyl-sn-glycero-3-phospho-(1D-myo-inositol-4,5-bisphosphate) + H2O = a 1,2-diacyl-sn-glycero-3-phospho-(1D-myo-inositol 4-phosphate) + phosphate. Probable inositol 5-phosphatase which regulates synaptic vesicle recycling in neurons by regulating clathrin-mediated endocytosis. The protein is Synaptojanin of Caenorhabditis elegans.